Reading from the N-terminus, the 129-residue chain is Glycine cleavage system H protein (129 aa).

In terms of domain architecture, Lipoyl-binding spans 24–106 (TYTVGITEHA…YAGGWIFKIK (83 aa)). Lys65 is subject to N6-lipoyllysine.

The protein belongs to the GcvH family. In terms of assembly, the glycine cleavage system is composed of four proteins: P, T, L and H. Requires (R)-lipoate as cofactor.

The glycine cleavage system catalyzes the degradation of glycine. The H protein shuttles the methylamine group of glycine from the P protein to the T protein. In Escherichia coli O7:K1 (strain IAI39 / ExPEC), this protein is Glycine cleavage system H protein.